Reading from the N-terminus, the 95-residue chain is Putative membrane protein insertion efficiency factor (95 aa).

It belongs to the UPF0161 family.

Its subcellular location is the cell membrane. Its function is as follows. Could be involved in insertion of integral membrane proteins into the membrane. The polypeptide is Putative membrane protein insertion efficiency factor (Lactobacillus delbrueckii subsp. bulgaricus (strain ATCC 11842 / DSM 20081 / BCRC 10696 / JCM 1002 / NBRC 13953 / NCIMB 11778 / NCTC 12712 / WDCM 00102 / Lb 14)).